The chain runs to 497 residues: Probable cytosol aminopeptidase (497 aa).

Mn(2+) is bound by residues K263 and D268. Residue K275 is part of the active site. The Mn(2+) site is built by D286, D345, and E347. Residue R349 is part of the active site.

Belongs to the peptidase M17 family. Mn(2+) is required as a cofactor.

It is found in the cytoplasm. It catalyses the reaction Release of an N-terminal amino acid, Xaa-|-Yaa-, in which Xaa is preferably Leu, but may be other amino acids including Pro although not Arg or Lys, and Yaa may be Pro. Amino acid amides and methyl esters are also readily hydrolyzed, but rates on arylamides are exceedingly low.. The catalysed reaction is Release of an N-terminal amino acid, preferentially leucine, but not glutamic or aspartic acids.. Presumably involved in the processing and regular turnover of intracellular proteins. Catalyzes the removal of unsubstituted N-terminal amino acids from various peptides. This chain is Probable cytosol aminopeptidase, found in Allorhizobium ampelinum (strain ATCC BAA-846 / DSM 112012 / S4) (Agrobacterium vitis (strain S4)).